Reading from the N-terminus, the 1425-residue chain is B-cell CLL/lymphoma 9 protein (1425 aa).

The tract at residues 1–172 is disordered; it reads MHPSNPKVRS…APEPISAQKT (172 aa). 2 stretches are compositionally biased toward polar residues: residues 7 to 21 and 34 to 48; these read KVRS…SSPK and MSPS…KFSN. Over residues 54–63 the composition is skewed to low complexity; the sequence is GSASQSQPSP. The segment covering 78 to 94 has biased composition (gly residues); it reads GPGGSMGLKNGAGNGAK. 2 stretches are compositionally biased toward basic and acidic residues: residues 100-112 and 120-135; these read ERSI…DQRD and SDIK…KSQE. Residue Ser104 is modified to Phosphoserine. Positions 144 to 157 are enriched in low complexity; it reads TPSTATAPRSSTPS. Ser157 carries the post-translational modification Phosphoserine. Phosphothreonine is present on Thr172. Residues 177–205 are interaction with PYGO1; sequence VYVFSTEMANKAAEAVLKGQVETIVSFHI. A compositionally biased stretch (polar residues) spans 207–226; it reads NISNSKSERSTAPLNTQIPT. Disordered stretches follow at residues 207 to 441 and 577 to 624; these read NISN…VPFS and VPNP…PNPQ. Composition is skewed to pro residues over residues 232–241 and 256–270; these read KPLPQQPPAP and PTPP…PTAA. The segment covering 304–320 has biased composition (polar residues); sequence GPNSTPNNRAVTPVSQG. Thr315 is subject to Phosphothreonine. Ser318 and Ser352 each carry phosphoserine. A compositionally biased stretch (basic and acidic residues) spans 355–380; sequence QLEHRERSLQTLRDIQRMLFPDEKEF. The tract at residues 358–374 is interaction with CTNNB1; sequence HRERSLQTLRDIQRMLF. Phosphoserine occurs at positions 686 and 688. Disordered stretches follow at residues 781–1003, 1031–1051, 1153–1199, and 1252–1275; these read RPFL…LSQN, VASS…SMNS, PHNG…GPGA, and PRGE…MQGM. Arg800 is subject to Asymmetric dimethylarginine. Low complexity predominate over residues 822 to 835; that stretch reads NPSSNPTSLSTAPP. Lys843 bears the N6-acetyllysine mark. Polar residues predominate over residues 866–890; it reads TMHQVQSPMLGSPSGNLKSPQTPSQ. The span at 891-902 shows a compositional bias: low complexity; that stretch reads LAGMLAGPAAAA. Phosphoserine is present on residues Ser906 and Ser916. Over residues 936–946 the composition is skewed to pro residues; the sequence is PKPPLQSPGIP. Gly residues predominate over residues 1157 to 1175; the sequence is PTGGQGNFPGGIGFPGEGP.

The protein belongs to the BCL9 family. As to quaternary structure, binds to beta-catenin (CTNNB1), PYGO1 and PYGO2; the interaction with PYGO1 increases PYGO1 affinity to histone H3 methylated at 'Lys 4'.

The protein localises to the nucleus. In terms of biological role, promotes beta-catenin's transcriptional activity. Involved in signal transduction through the Wnt pathway. This Mus musculus (Mouse) protein is B-cell CLL/lymphoma 9 protein (Bcl9).